The following is a 122-amino-acid chain: Large ribosomal subunit protein uL14 (122 aa).

The protein belongs to the universal ribosomal protein uL14 family. Part of the 50S ribosomal subunit. Forms a cluster with proteins L3 and L19. In the 70S ribosome, L14 and L19 interact and together make contacts with the 16S rRNA in bridges B5 and B8.

Its function is as follows. Binds to 23S rRNA. Forms part of two intersubunit bridges in the 70S ribosome. The sequence is that of Large ribosomal subunit protein uL14 from Alkaliphilus metalliredigens (strain QYMF).